The primary structure comprises 322 residues: Cysteine protease YopT (322 aa).

Active-site residues include Cys-139, His-258, and Asp-274.

This sequence belongs to the peptidase C58 family. As to quaternary structure, interacts with human ARHA.

It is found in the secreted. Cysteine protease, which is translocated into infected cells and plays a central role in pathogenesis by cleaving the C-terminus end of the human small GTPase RhoA/ARHA, a regulator of cytoskeleton. Once cleaved, ARHA loses its lipid modification, and is released from the cell membrane, leading to the subsequent disruption of actin cytoskeleton of the host cell. The chain is Cysteine protease YopT (yopT) from Yersinia pseudotuberculosis serotype I (strain IP32953).